The chain runs to 696 residues: MKQKFSSMIDRYTHQQLRIGLVSPQQISTWSKKILPNGEIVGEVTKPYTFHYKTNKPEKDGLFCERIFGPIKSGICACGNYRVIGDEKEDPQFCEQCGVEFVDSRIRRYQMGYIKLAYPVMHVWYLKRLPSYIVNLLDKPLNELEDLVYCGFYFARPIDKKPTFLRLRGLLEYEIQPWKYRIPIFFTTRSFDTFRNREMSTGGGSIRQQLANLDLRMIIDYSLVEWKELEEEEPTGNEWEDRKVGRRKDFLLRRMELAKHFIRTNIEPKWMVLCLLPVLPPELRPIYHIDEDKLVTSDINEIYRRIIYRNNTLTDLLTTSIATPEELIISQEKLLQEAVDALLDNGICGQPMRDDHNRIYKSLSDVIEGKEGRVRETLLGKRVDYSGRSVIVVGPSLSLHRCGLPREIAIELFQAFVIRDLIRKHLASNIGVAKSQIRKKKPIVWEILQEILDDHPVLLNRAPTLHRLGIQAFLPILVEGRAICLHPLVCKGFNADFDGDQMAVHVPLSLEAQAEARLLMFSHMNLLSPTIGDPISAPTQDMLSGLYVLTSGNRRGICVNRYNPCNRRNYQNEDNNYKYTKKKEPFFCNAYDAIGAYRQKRIHLGSPLWLRWRLDQRVIAAREAPIEIHYESLGTYYEIYGHYLIVRSIKKEILYIYIRTTLGHIYLYREIEEAIQGFWQGCCNSMLPAGIRVSPG.

The Zn(2+) site is built by cysteine 76, cysteine 78, cysteine 94, and cysteine 97. 3 residues coordinate Mg(2+): aspartate 496, aspartate 498, and aspartate 500.

This sequence belongs to the RNA polymerase beta' chain family. RpoC1 subfamily. In plastids the minimal PEP RNA polymerase catalytic core is composed of four subunits: alpha, beta, beta', and beta''. When a (nuclear-encoded) sigma factor is associated with the core the holoenzyme is formed, which can initiate transcription. The cofactor is Mg(2+). It depends on Zn(2+) as a cofactor.

It is found in the plastid. Its subcellular location is the chloroplast. It carries out the reaction RNA(n) + a ribonucleoside 5'-triphosphate = RNA(n+1) + diphosphate. Functionally, DNA-dependent RNA polymerase catalyzes the transcription of DNA into RNA using the four ribonucleoside triphosphates as substrates. The polypeptide is DNA-directed RNA polymerase subunit beta' (Guizotia abyssinica (Niger)).